We begin with the raw amino-acid sequence, 171 residues long: S-ribosylhomocysteine lyase (171 aa).

Positions 54, 58, and 128 each coordinate Fe cation.

The protein belongs to the LuxS family. Homodimer. It depends on Fe cation as a cofactor.

It carries out the reaction S-(5-deoxy-D-ribos-5-yl)-L-homocysteine = (S)-4,5-dihydroxypentane-2,3-dione + L-homocysteine. Functionally, involved in the synthesis of autoinducer 2 (AI-2) which is secreted by bacteria and is used to communicate both the cell density and the metabolic potential of the environment. The regulation of gene expression in response to changes in cell density is called quorum sensing. Catalyzes the transformation of S-ribosylhomocysteine (RHC) to homocysteine (HC) and 4,5-dihydroxy-2,3-pentadione (DPD). The sequence is that of S-ribosylhomocysteine lyase from Proteus mirabilis (strain HI4320).